The following is a 733-amino-acid chain: Hypermethylated in cancer 1 protein (733 aa).

The region spanning 47–110 is the BTB domain; sequence CDVIIVVQNA…IYTGRLTDSV (64 aa). The interval 154–315 is mediates HDAC-dependent transcriptional repression; sequence KYCHLRGGGS…PFRGSGGSPG (162 aa). Omega-N-methylarginine is present on R159. The interval 189–209 is disordered; that stretch reads YSSPAGPPPPPAAEPPSGPDA. Pro residues predominate over residues 193–206; sequence AGPPPPPAAEPPSG. A Phosphoserine modification is found at S237. The interval 241–247 is interaction with CTBP1; the sequence is GLDLSKK. Positions 241 to 421 are disordered; sequence GLDLSKKSPP…PGGHLEGYPC (181 aa). S248 is subject to Phosphoserine. K333 carries the post-translational modification N6-acetyllysine; alternate. Residue K333 forms a Glycyl lysine isopeptide (Lys-Gly) (interchain with G-Cter in SUMO); alternate linkage. Residues 344-361 show a composition bias toward basic and acidic residues; the sequence is ELVRDRGSPGERLEERGG. At S366 the chain carries Phosphoserine. Over residues 368–380 the composition is skewed to pro residues; that stretch reads GGPPLGLVPPPRY. 5 C2H2-type zinc fingers span residues 437–464, 507–534, 535–562, 563–590, and 591–618; these read YVCI…EEEE, YRCA…LTRP, YPCT…GLKP, FACD…GEKP, and YECQ…VGGA. Phosphoserine is present on S704.

The protein belongs to the krueppel C2H2-type zinc-finger protein family. Hic subfamily. Self-associates. Interacts with HIC2. Interacts with CTBP1 and CTBP2. Interacts with TCF7L2 and ARID1A. Interacts with MTA1 and MBD3; indicative for an association with the NuRD complex. Interacts with SIRT1. Acetylated on several residues, including Lys-333. Lys-333 is deacetylated by SIRT1. Post-translationally, sumoylated on Lys-333 by a PIAS family member, which enhances interaction with MTA1, positively regulates transcriptional repression activity and is enhanced by HDAC4. Ubiquitously expressed with highest levels in heart and lung.

It localises to the nucleus. Its function is as follows. Transcriptional repressor. Recognizes and binds to the consensus sequence '5-[CG]NG[CG]GGGCA[CA]CC-3'. May act as a tumor suppressor. Involved in development of head, face, limbs and ventral body wall. Involved in down-regulation of SIRT1 and thereby is involved in regulation of p53/TP53-dependent apoptotic DNA-damage responses. The specific target gene promoter association seems to be depend on corepressors, such as CTBP1 or CTBP2 and MTA1. In cooperation with MTA1 (indicative for an association with the NuRD complex) represses transcription from CCND1/cyclin-D1 and CDKN1C/p57Kip2 specifically in quiescent cells. Involved in regulation of the Wnt signaling pathway probably by association with TCF7L2 and preventing TCF7L2 and CTNNB1 association with promoters of TCF-responsive genes. Seems to repress transcription from E2F1 and ATOH1 which involves ARID1A, indicative for the participation of a distinct SWI/SNF-type chromatin-remodeling complex. Probably represses transcription from ACKR3, FGFBP1 and EFNA1. This Mus musculus (Mouse) protein is Hypermethylated in cancer 1 protein (Hic1).